We begin with the raw amino-acid sequence, 438 residues long: Aflatoxin cluster transcriptional coactivator aflS (438 aa).

Residues 65–134 (LALYNQLLAC…PSPGHVAHSV (70 aa)) form the HTH iclR-type domain. Residues 95–114 (FEDVADIAGVPECRLRRLVR) constitute a DNA-binding region (H-T-H motif).

Interacts with aflR.

The protein resides in the nucleus. The protein localises to the endosome. Transcription coactivator involved in regulation of the aflatoxin biosynthesis gene cluster with aflR. The ratio of the expression data between aflS:aflR plays a crucial role in the regulation of aflatoxins production. A high ratio, produced at a range between 17 and 30 degrees Celsius, corresponds with the production profile of aflatoxin G1 biosynthesis. A low ratio, produced over 30 degrees Celsius, is related to aflatoxin B1 biosynthesis. AflJ may act in aflR transport to or from the nucleus, thus controlling the availability of aflR for transcriptional activation of aflatoxin biosynthesis cluster genes. AflJ may also assist in directing endosomes to the cytoplasmic membrane for aflatoxin export. This chain is Aflatoxin cluster transcriptional coactivator aflS, found in Aspergillus parasiticus (strain ATCC 56775 / NRRL 5862 / SRRC 143 / SU-1).